The primary structure comprises 721 residues: Protein Hook homolog 2 (721 aa).

The 117-residue stretch at 7–123 (VELCDSLLTW…KMVQLVLGCA (117 aa)) folds into the Calponin-homology (CH) domain. Coiled-coil stretches lie at residues 181-425 (LSED…RCSH) and 484-659 (DLQN…EKLI). The disordered stretch occupies residues 696–721 (TNARRGQISRSHTLLPRYTDKRQSLS).

This sequence belongs to the hook family. As to quaternary structure, interacts with microtubules.

The protein localises to the cytoplasm. It is found in the cytoskeleton. The protein resides in the microtubule organizing center. Its subcellular location is the centrosome. Functionally, may function to promote vesicle trafficking and/or fusion. May contribute to the establishment and maintenance of centrosome function. This Xenopus laevis (African clawed frog) protein is Protein Hook homolog 2 (hook2).